The chain runs to 100 residues: Protein RnfH (100 aa).

It belongs to the UPF0125 (RnfH) family.

This is Protein RnfH from Pseudomonas paraeruginosa (strain DSM 24068 / PA7) (Pseudomonas aeruginosa (strain PA7)).